Consider the following 123-residue polypeptide: uncharacterized protein (123 aa).

This is an uncharacterized protein from Human cytomegalovirus (strain AD169) (HHV-5).